A 363-amino-acid polypeptide reads, in one-letter code: Pulmonary surfactant-associated protein B (363 aa).

The signal sequence occupies residues 1–16; the sequence is LLWLLLLPTLCGLGAA. The propeptide occupies 17 to 180; sequence DWSAPSLACA…PHTQDLSEQQ (164 aa). The 41-residue stretch at 18-58 folds into the Saposin A-type domain; that stretch reads WSAPSLACARGPAFWCQSLEQALQCRALGHCLQEVWGNARA. 3 Saposin B-type domains span residues 58-140, 184-261, and 277-352; these read ADDL…KPGL, PLPY…SHED, and QESK…RTTF. Intrachain disulfides connect Cys62-Cys136, Cys65-Cys130, Cys93-Cys105, Cys188-Cys257, Cys191-Cys251, Cys215-Cys226, Cys281-Cys348, Cys284-Cys342, and Cys307-Cys317. Positions 260–363 are excised as a propeptide; it reads EDSAGPALAS…PLQCIHIPHF (104 aa). Residue Asn293 is glycosylated (N-linked (GlcNAc...) asparagine).

As to quaternary structure, homodimer; disulfide-linked.

It is found in the secreted. Its subcellular location is the extracellular space. It localises to the surface film. Its function is as follows. Pulmonary surfactant-associated proteins promote alveolar stability by lowering the surface tension at the air-liquid interface in the peripheral air spaces. SP-B increases the collapse pressure of palmitic acid to nearly 70 millinewtons per meter. This Canis lupus familiaris (Dog) protein is Pulmonary surfactant-associated protein B (SFTPB).